A 117-amino-acid polypeptide reads, in one-letter code: UPF0127 protein PYRAB11210 (117 aa).

This sequence belongs to the UPF0127 family.

The chain is UPF0127 protein PYRAB11210 from Pyrococcus abyssi (strain GE5 / Orsay).